We begin with the raw amino-acid sequence, 81 residues long: Protein Vpu (81 aa).

Over 1–6 the chain is Extracellular; the sequence is MQPIQI. A helical transmembrane segment spans residues 7–27; it reads AIVALVVAIIIAIVVWSIVII. The Cytoplasmic segment spans residues 28 to 81; sequence EYRKILRQRKIDRLIDRLIERAEDSGNESEGEISALVEMGVEMGHHAPWDVDDL. 2 positions are modified to phosphoserine; by host CK2: serine 52 and serine 56.

It belongs to the HIV-1 VPU protein family. Homopentamer. Interacts with host CD4 and BRTC; these interactions induce proteasomal degradation of CD4. Interacts with host BST2; this interaction leads to the degradation of host BST2. Interacts with host FBXW11. Interacts with host AP1M1; this interaction plays a role in the mistrafficking and subsequent degradation of host BST2. Interacts with host RANBP2; this interaction allows Vpu to down-regulate host BLM sumoylation. In terms of processing, phosphorylated by host CK2. This phosphorylation is necessary for interaction with human BTRC and degradation of CD4.

It is found in the host membrane. Ion channel activity is inhibited by hexamethylene amiloride in vitro. Its function is as follows. Enhances virion budding by targeting host CD4 and Tetherin/BST2 to proteasome degradation. Degradation of CD4 prevents any unwanted premature interactions between viral Env and its host receptor CD4 in the endoplasmic reticulum. Degradation of antiretroviral protein Tetherin/BST2 is important for virion budding, as BST2 tethers new viral particles to the host cell membrane. Mechanistically, Vpu bridges either CD4 or BST2 to BTRC, a substrate recognition subunit of the Skp1/Cullin/F-box protein E3 ubiquitin ligase, induces their ubiquitination and subsequent proteasomal degradation. The alteration of the E3 ligase specificity by Vpu seems to promote the degradation of host IKBKB, leading to NF-kappa-B down-regulation and subsequent apoptosis. Acts as a viroporin that forms an oligomeric ion channel in membranes. Modulates the host DNA repair mechanisms to promote degradation of nuclear viral cDNA in cells that are already productively infected in order to suppress immune sensing and proviral hyper-integration (superinfection). Manipulates PML-NBs and modulates SUMOylation of host BLM protein thereby enhancing its DNA-end processing activity toward viral unintegrated linear DNA. Also inhibits RAD52-mediated homologous repair of viral cDNA, preventing the generation of dead-end circular forms of single copies of the long terminal repeat and permitting sustained nucleolytic attack. This Human immunodeficiency virus type 1 group M subtype B (isolate BH10) (HIV-1) protein is Protein Vpu.